The sequence spans 142 residues: Large ribosomal subunit protein uL11 (142 aa).

It belongs to the universal ribosomal protein uL11 family. As to quaternary structure, part of the ribosomal stalk of the 50S ribosomal subunit. Interacts with L10 and the large rRNA to form the base of the stalk. L10 forms an elongated spine to which L12 dimers bind in a sequential fashion forming a multimeric L10(L12)X complex. One or more lysine residues are methylated.

Its function is as follows. Forms part of the ribosomal stalk which helps the ribosome interact with GTP-bound translation factors. The chain is Large ribosomal subunit protein uL11 from Solibacter usitatus (strain Ellin6076).